The primary structure comprises 270 residues: Formamidopyrimidine-DNA glycosylase (270 aa).

Pro2 (schiff-base intermediate with DNA) is an active-site residue. Glu3 acts as the Proton donor in catalysis. Residue Lys57 is the Proton donor; for beta-elimination activity of the active site. DNA-binding residues include His90, Arg109, and Lys151. Residues 236–270 (RVYGRKGQACEVCESEIQSVTLGQRNTFFCEQCQK) form an FPG-type zinc finger. Residue Arg260 is the Proton donor; for delta-elimination activity of the active site.

This sequence belongs to the FPG family. In terms of assembly, monomer. It depends on Zn(2+) as a cofactor.

It carries out the reaction Hydrolysis of DNA containing ring-opened 7-methylguanine residues, releasing 2,6-diamino-4-hydroxy-5-(N-methyl)formamidopyrimidine.. It catalyses the reaction 2'-deoxyribonucleotide-(2'-deoxyribose 5'-phosphate)-2'-deoxyribonucleotide-DNA = a 3'-end 2'-deoxyribonucleotide-(2,3-dehydro-2,3-deoxyribose 5'-phosphate)-DNA + a 5'-end 5'-phospho-2'-deoxyribonucleoside-DNA + H(+). Functionally, involved in base excision repair of DNA damaged by oxidation or by mutagenic agents. Acts as a DNA glycosylase that recognizes and removes damaged bases. Has a preference for oxidized purines, such as 7,8-dihydro-8-oxoguanine (8-oxoG). Has AP (apurinic/apyrimidinic) lyase activity and introduces nicks in the DNA strand. Cleaves the DNA backbone by beta-delta elimination to generate a single-strand break at the site of the removed base with both 3'- and 5'-phosphates. The sequence is that of Formamidopyrimidine-DNA glycosylase from Pseudoalteromonas atlantica (strain T6c / ATCC BAA-1087).